Consider the following 238-residue polypeptide: LexA repressor (238 aa).

The H-T-H motif DNA-binding region spans 26-46 (FDEMKDALDLASKSGIHRLIT). Residues S158 and K196 each act as for autocatalytic cleavage activity in the active site.

Belongs to the peptidase S24 family. In terms of assembly, homodimer.

The catalysed reaction is Hydrolysis of Ala-|-Gly bond in repressor LexA.. Functionally, represses a number of genes involved in the response to DNA damage (SOS response), including recA and lexA. In the presence of single-stranded DNA, RecA interacts with LexA causing an autocatalytic cleavage which disrupts the DNA-binding part of LexA, leading to derepression of the SOS regulon and eventually DNA repair. The sequence is that of LexA repressor from Rhizobium meliloti (strain 1021) (Ensifer meliloti).